Consider the following 2471-residue polypeptide: Neurogenic locus notch homolog protein 2 (2471 aa).

The signal sequence occupies residues 1 to 25 (MPALRPALLWALLALWLCCAAPAHA). EGF-like domains lie at 26–63 (LQCRDGYEPCVNEGMCVTYHNGTGYCKCPEGFLGEYCQ), 64–102 (HRDPCEKNRCQNGGTCVAQAMLGKATCRCASGFTGEDCQ), 105–143 (TSHPCFVSRPCLNGGTCHMLSRDTYECTCQVGFTGKECQ), and 144–180 (WTDACLSHPCANGSTCTTVANQFSCKCLTGFTGQKCE). The Extracellular segment spans residues 26 to 1677 (LQCRDGYEPC…SESLTPERTQ (1652 aa)). 84 cysteine pairs are disulfide-bonded: C28-C41, C35-C51, C53-C62, C68-C79, C73-C90, C92-C101, C109-C121, C115-C131, C133-C142, C148-C159, C153-C168, C170-C179, C186-C198, C192-C207, C209-C218, C225-C236, C230-C246, C248-C257, C264-C275, C269-C284, C286-C295, C302-C315, C309-C324, C326-C335, C342-C353, C347-C362, C364-C373, C379-C390, C384-C401, C403-C412, C419-C433, C427-C442, C444-C453, C460-C471, C465-C480, C482-C491, C498-C509, C503-C518, C520-C529, C536-C547, C541-C556, C558-C567, C574-C584, C579-C593, C595-C604, C611-C622, C616-C631, C633-C642, C649-C659, C654-C668, C670-C679, C686-C697, C691-C706, C708-C717, C724-C734, C729-C743, C745-C754, C761-C772, C766-C781, C783-C792, C799-C810, C804-C819, C821-C830, C837-C848, C842-C859, C861-C870, C877-C888, C882-C897, C899-C908, C915-C926, C920-C935, C937-C946, C953-C964, C958-C973, C975-C984, C991-C1002, C996-C1011, C1013-C1022, C1029-C1040, C1034-C1049, C1051-C1060, C1067-C1078, C1072-C1087, and C1089-C1098. N46 carries N-linked (GlcNAc...) asparagine glycosylation. N-linked (GlcNAc...) asparagine glycosylation occurs at N155. The region spanning 182 to 219 (DVNECDIPGHCQHGGTCLNLPGSYQCQCPQGFTGQYCD) is the EGF-like 5; calcium-binding domain. The region spanning 221-258 (LYVPCAPSPCVNGGTCRQTGDFTFECNCLPGFEGSTCE) is the EGF-like 6 domain. Residues 260–296 (NIDDCPNHRCQNGGVCVDGVNTYNCRCPPQWTGQFCT) enclose the EGF-like 7; calcium-binding domain. One can recognise an EGF-like 8; calcium-binding domain in the interval 298-336 (DVDECLLQPNACQNGGTCANRNGGYGCVCVNGWSGDDCS). In terms of domain architecture, EGF-like 9; calcium-binding spans 338-374 (NIDDCAFASCTPGSTCIDRVASFSCMCPEGKAGLLCH). Positions 375-413 (LDDACISNPCHKGALCDTNPLNGQYICTCPQGYKGADCT) constitute an EGF-like 10 domain. The 40-residue stretch at 415 to 454 (DVDECAMANSNPCEHAGKCVNTDGAFHCECLKGYAGPRCE) folds into the EGF-like 11; calcium-binding domain. The 37-residue stretch at 456 to 492 (DINECHSDPCQNDATCLDKIGGFTCLCMPGFKGVHCE) folds into the EGF-like 12; calcium-binding domain. The region spanning 494 to 530 (EINECQSNPCVNNGQCVDKVNRFQCLCPPGFTGPVCQ) is the EGF-like 13; calcium-binding domain. The EGF-like 14; calcium-binding domain maps to 532–568 (DIDDCSSTPCLNGAKCIDHPNGYECQCATGFTGVLCE). Residues 570–605 (NIDNCDPDPCHHGQCQDGIDSYTCICNPGYMGAICS) form the EGF-like 15; calcium-binding domain. In terms of domain architecture, EGF-like 16; calcium-binding spans 607-643 (QIDECYSSPCLNDGRCIDLVNGYQCNCQPGTSGVNCE). A glycan (O-linked (Glc...) serine; alternate) is linked at S613. Residue S613 is glycosylated (O-linked (Xyl...) serine; alternate). The EGF-like 17; calcium-binding domain maps to 645 to 680 (NFDDCASNPCIHGICMDGINRYSCVCSPGFTGQRCN). The EGF-like 18; calcium-binding domain maps to 682–718 (DIDECASNPCRKGATCINGVNGFRCICPEGPHHPSCY). The 36-residue stretch at 720–755 (QVNECLSNPCIHGNCTGGLSGYKCLCDAGWVGINCE) folds into the EGF-like 19 domain. Residue N733 is glycosylated (N-linked (GlcNAc...) asparagine). One can recognise an EGF-like 20; calcium-binding domain in the interval 757-793 (DKNECLSNPCQNGGTCDNLVNGYRCTCKKGFKGYNCQ). An EGF-like 21; calcium-binding domain is found at 795–831 (NIDECASNPCLNQGTCFDDISGYTCHCVLPYTGKNCQ). The EGF-like 22 domain maps to 833–871 (VLAPCSPNPCENAAVCKESPNFESYTCLCAPGWQGQRCT). Residues 873-909 (DIDECISKPCMNHGLCHNTQGSYMCECPPGFSGMDCE) form the EGF-like 23; calcium-binding domain. Residues 911-947 (DIDDCLANPCQNGGSCMDGVNTFSCLCLPGFTGDKCQ) form the EGF-like 24; calcium-binding domain. Residues 949-985 (DMNECLSEPCKNGGTCSDYVNSYTCKCQAGFDGVHCE) form the EGF-like 25; calcium-binding domain. In terms of domain architecture, EGF-like 26; calcium-binding spans 987 to 1023 (NINECTESSCFNGGTCVDGINSFSCLCPVGFTGSFCL). An EGF-like 27; calcium-binding domain is found at 1025-1061 (EINECSSHPCLNEGTCVDGLGTYRCSCPLGYTGKNCQ). 2 EGF-like domains span residues 1063–1099 (LVNLCSRSPCKNKGTCVQKKAESQCLCPSGWAGAYCD) and 1101–1147 (PNVS…SYCE). An N-linked (GlcNAc...) asparagine glycan is attached at N1102. Intrachain disulfides connect C1105/C1126, C1120/C1135, C1137/C1146, C1153/C1164, C1158/C1173, C1175/C1184, C1191/C1202, C1196/C1211, C1213/C1222, C1229/C1241, C1235/C1250, C1252/C1261, C1268/C1281, C1273/C1290, C1292/C1301, C1308/C1319, C1313/C1331, C1333/C1342, C1378/C1389, C1383/C1400, C1402/C1411, C1425/C1448, C1430/C1443, and C1439/C1455. The EGF-like 30; calcium-binding domain occupies 1149-1185 (QLDECASNPCQHGATCSDFIGGYRCECVPGYQGVNCE). The EGF-like 31; calcium-binding domain maps to 1187–1223 (EVDECQNQPCQNGGTCIDLVNHFKCSCPPGTRGLLCE). The 38-residue stretch at 1225–1262 (NIDDCARGPHCLNGGQCMDRIGGYSCRCLPGFAGERCE) folds into the EGF-like 32; calcium-binding domain. EGF-like domains are found at residues 1264–1302 (DINECLSNPCSSEGSLDCIQLTNDYLCVCRSAFTGRHCE), 1304–1343 (FVDVCPQMPCLNGGTCAVASNMPDGFICRCPPGFSGARCQ), and 1374–1412 (CESGCASSPCQHGGSCHPQRQPPYYSCQCAPPFSGSRCE). LNR repeat units follow at residues 1425–1465 (CLSQ…PWAN), 1466–1502 (CSSPLPCWDYINNQCDELCNTVECLFDNFECQGNSKT), and 1503–1544 (CKYD…NLAE). Positions 1425–1677 (CLSQYCADKA…SESLTPERTQ (253 aa)) are negative regulatory region (NRR). N1465 carries N-linked (GlcNAc...) asparagine glycosylation. 7 disulfides stabilise this stretch: C1466-C1489, C1472-C1484, C1480-C1496, C1503-C1527, C1509-C1522, C1518-C1534, and C1632-C1639. The helical transmembrane segment at 1678–1698 (LLYLLAVAVVIILFIILLGVI) threads the bilayer. Residues 1699 to 2471 (MAKRKRKHGS…PPHNNMQVYA (773 aa)) are Cytoplasmic-facing. T1716 carries the phosphothreonine modification. A disordered region spans residues 1754 to 1788 (TSEHWVDDEGPQPKKVKAEDEALLSEEDDPIDRRP). A compositionally biased stretch (acidic residues) spans 1774–1783 (EALLSEEDDP). S1778 is subject to Phosphoserine. Residue T1802 is modified to Phosphothreonine. S1804 carries the post-translational modification Phosphoserine. The residue at position 1808 (T1808) is a Phosphothreonine. ANK repeat units follow at residues 1827–1871 (DGCT…SLQA), 1876–1905 (TGEMALHLAARYSRADAAKRLLDAGADANA), 1909–1939 (MGRCPLHAAVAADAQGVFQILIRNRVTDLDA), 1943–1972 (DGTTPLILAARLAVEGMVAELINCQADVNA), 1976–2005 (HGKSALHWAAAVNNVEATLLLLKNGANRDM), and 2009–2038 (KEETPLFLAAREGSYEAAKILLDHFANRDI). Phosphoserine occurs at positions 1842 and 1845. Phosphoserine is present on residues S2070, S2078, and S2081. 2 disordered regions span residues 2091–2168 (FLSL…TSSP) and 2380–2471 (VGKY…QVYA). T2097 carries the post-translational modification Phosphothreonine. Positions 2098–2107 (PMGKKSRRPS) are enriched in basic residues. Composition is skewed to polar residues over residues 2108–2117 (AKSTMPTSLP), 2137–2150 (EKVQLSESSVTLSP), 2159–2168 (TYVSDTTSSP), and 2388–2406 (SQHSYASSNAAERTPSHSG). Positions 2417 to 2445 (PSPESPDQWSSSSPHSASDWSDVTTSPTP) are enriched in low complexity.

Belongs to the NOTCH family. As to quaternary structure, heterodimer of a C-terminal fragment N(TM) and an N-terminal fragment N(EC) which are probably linked by disulfide bonds. Interacts with MAML1, MAML2 and MAML3 which act as transcriptional coactivators for NOTCH2. Interacts with RELA/p65. Interacts with HIF1AN. Interacts (via ANK repeats) with TCIM, the interaction inhibits the nuclear translocation of NOTCH2 N2ICD. Interacts with CUL1, RBX1, SKP1 and FBXW7 that are SCF(FBXW7) E3 ubiquitin-protein ligase complex components. Interacts with MINAR1; this interaction increases MINAR1 stability and function. Interacts with NOTCH2NL (NOTCH2NLA, NOTCH2NLB and/or NOTCH2NLC); leading to enhance Notch signaling pathway in a non-cell-autonomous manner. Interacts with MDK; this interaction mediates a nuclear accumulation of NOTCH2 and therefore activation of NOTCH2 signaling leading to interaction between HES1 and STAT3. Interacts with MINAR2. Post-translationally, synthesized in the endoplasmic reticulum as an inactive form which is proteolytically cleaved by a furin-like convertase in the trans-Golgi network before it reaches the plasma membrane to yield an active, ligand-accessible form. Cleavage results in a C-terminal fragment N(TM) and a N-terminal fragment N(EC). Following ligand binding, it is cleaved by TNF-alpha converting enzyme (TACE) to yield a membrane-associated intermediate fragment called notch extracellular truncation (NEXT). This fragment is then cleaved by presenilin dependent gamma-secretase to release a notch-derived peptide containing the intracellular domain (NICD) from the membrane. Hydroxylated by HIF1AN. In terms of processing, can be either O-glucosylated or O-xylosylated at Ser-613 by POGLUT1. Post-translationally, phosphorylated by GSK3. GSK3-mediated phosphorylation is necessary for NOTCH2 recognition by FBXW7, ubiquitination and degradation via the ubiquitin proteasome pathway. Expressed in the brain, heart, kidney, lung, skeletal muscle and liver. Ubiquitously expressed in the embryo.

Its subcellular location is the cell membrane. The protein resides in the nucleus. The protein localises to the cytoplasm. Functionally, functions as a receptor for membrane-bound ligands Jagged-1 (JAG1), Jagged-2 (JAG2) and Delta-1 (DLL1) to regulate cell-fate determination. Upon ligand activation through the released notch intracellular domain (NICD) it forms a transcriptional activator complex with RBPJ/RBPSUH and activates genes of the enhancer of split locus. Affects the implementation of differentiation, proliferation and apoptotic programs. Involved in bone remodeling and homeostasis. In collaboration with RELA/p65 enhances NFATc1 promoter activity and positively regulates RANKL-induced osteoclast differentiation. Positively regulates self-renewal of liver cancer cells. The sequence is that of Neurogenic locus notch homolog protein 2 from Homo sapiens (Human).